The chain runs to 351 residues: uncharacterized protein (351 aa).

Residues 1-32 (MKNKKRVFIASSLSCVLLLLSAANTEANSANK) form the signal peptide. The segment at 26 to 74 (EANSANKDSQDQTKKEHVDKAQQKEKRNVNDKDKNTPGPDDIGKNGKVT) is disordered. Basic and acidic residues predominate over residues 33 to 60 (DSQDQTKKEHVDKAQQKEKRNVNDKDKN).

This sequence belongs to the aerolysin family.

This is an uncharacterized protein from Staphylococcus aureus (strain MRSA252).